A 191-amino-acid chain; its full sequence is Penicillin-binding protein activator LpoB (191 aa).

An N-terminal signal peptide occupies residues 1-16 (MKRILFVILSTMLLAS). Cys-17 carries the N-palmitoyl cysteine lipid modification. Cys-17 is lipidated: S-diacylglycerol cysteine. The disordered stretch occupies residues 25-48 (QPAPVTPVEPKEKQETTPIEPSEK).

It belongs to the LpoB family. In terms of assembly, interacts with PBP1b.

It is found in the cell outer membrane. Functionally, regulator of peptidoglycan synthesis that is essential for the function of penicillin-binding protein 1B (PBP1b). The protein is Penicillin-binding protein activator LpoB of Xenorhabdus nematophila (strain ATCC 19061 / DSM 3370 / CCUG 14189 / LMG 1036 / NCIMB 9965 / AN6).